The primary structure comprises 328 residues: Ribosomal RNA small subunit methyltransferase H (328 aa).

S-adenosyl-L-methionine contacts are provided by residues 37–39 (GGH), Asp57, Phe83, Asp104, and Gln111.

The protein belongs to the methyltransferase superfamily. RsmH family.

Its subcellular location is the cytoplasm. The enzyme catalyses cytidine(1402) in 16S rRNA + S-adenosyl-L-methionine = N(4)-methylcytidine(1402) in 16S rRNA + S-adenosyl-L-homocysteine + H(+). In terms of biological role, specifically methylates the N4 position of cytidine in position 1402 (C1402) of 16S rRNA. In Neisseria meningitidis serogroup A / serotype 4A (strain DSM 15465 / Z2491), this protein is Ribosomal RNA small subunit methyltransferase H.